The sequence spans 475 residues: Aspartic proteinase 39 (475 aa).

An N-terminal signal peptide occupies residues 1–23; that stretch reads MELRRKLCIVVAVFVIVIEFASA. A Peptidase A1 domain is found at 74–422; the sequence is YFTKIKLGSP…DLDNEVIGWA (349 aa). Residue Asp92 is part of the active site. Asn124 and Asn222 each carry an N-linked (GlcNAc...) asparagine glycan. Residue Asp303 is part of the active site. Residues Asn425 and Asn446 are each glycosylated (N-linked (GlcNAc...) asparagine). The GPI-anchor amidated serine moiety is linked to residue Ser449. The propeptide at 450 to 475 is removed in mature form; that stretch reads APRLLMITKLLTILSPLIVMAFTSLA.

This sequence belongs to the peptidase A1 family. In terms of tissue distribution, highly expressed in pollen and pollen tubes. Mostly expressed in inflorescence, flowers and siliques, and barely in leaves and seedlings.

The protein resides in the cell membrane. It is found in the cytoplasm. The protein localises to the cytosol. Functionally, displays aspartic proteolytic activity. Together with A36, contributes to pollen and ovule development, including the apical cell wall constitution of the growing pollen tubes. This Arabidopsis thaliana (Mouse-ear cress) protein is Aspartic proteinase 39.